A 273-amino-acid chain; its full sequence is 2,3,4,5-tetrahydropyridine-2,6-dicarboxylate N-succinyltransferase (273 aa).

This sequence belongs to the transferase hexapeptide repeat family.

The protein resides in the cytoplasm. The catalysed reaction is (S)-2,3,4,5-tetrahydrodipicolinate + succinyl-CoA + H2O = (S)-2-succinylamino-6-oxoheptanedioate + CoA. It functions in the pathway amino-acid biosynthesis; L-lysine biosynthesis via DAP pathway; LL-2,6-diaminopimelate from (S)-tetrahydrodipicolinate (succinylase route): step 1/3. The polypeptide is 2,3,4,5-tetrahydropyridine-2,6-dicarboxylate N-succinyltransferase (Acinetobacter baumannii (strain AB307-0294)).